Consider the following 674-residue polypeptide: NADH-ubiquinone oxidoreductase chain 5 (674 aa).

The next 17 membrane-spanning stretches (helical) occupy residues 27-47 (GAHI…IVAF), 81-101 (LTVS…IFSV), 113-133 (FFAY…GDNY), 135-155 (IMFV…NFWF), 173-193 (VGDM…GNLD), 200-220 (IAPF…LLAA), 242-262 (TPVS…YLLL), 275-295 (LIVI…TGLL), 301-323 (RVIA…LSQY), 325-345 (VALF…LAAG), 363-383 (LIGF…SLIA), 410-430 (VAYW…LRLI), 453-473 (TIVM…GYVA), 514-534 (AIGT…LPVF), 556-576 (YVDV…GYVI), 616-636 (ALYL…PVLL), and 639-659 (ALIN…IPYI).

This sequence belongs to the complex I subunit 5 family.

The protein resides in the mitochondrion inner membrane. It carries out the reaction a ubiquinone + NADH + 5 H(+)(in) = a ubiquinol + NAD(+) + 4 H(+)(out). In terms of biological role, core subunit of the mitochondrial membrane respiratory chain NADH dehydrogenase (Complex I) that is believed to belong to the minimal assembly required for catalysis. Complex I functions in the transfer of electrons from NADH to the respiratory chain. The immediate electron acceptor for the enzyme is believed to be ubiquinone. In Mycosarcoma maydis (Corn smut fungus), this protein is NADH-ubiquinone oxidoreductase chain 5 (ND5).